Reading from the N-terminus, the 1079-residue chain is Lon protease homolog, mitochondrial (1079 aa).

The N-terminal 60 residues, 1 to 60 (MLRPRTYVRKLAWRCPRKSQLGLRLATSVSSHKSLPLPMNFDISHSQSAFRAYQDIIHRN), are a transit peptide targeting the mitochondrion. The segment covering 61–116 (KSVGDDEPSQRSENENNPSESDKDSNQDPETPKKDKESENDKEPEKEKDIENDNKV) has biased composition (basic and acidic residues). Disordered stretches follow at residues 61 to 158 (KSVG…VDPV) and 262 to 285 (LTTP…ESFP). A compositionally biased stretch (polar residues) spans 117–131 (SSESNENVTLASSNT). The span at 132–143 (GGAAPPNGNNNG) shows a compositional bias: low complexity. Residues 165 to 391 (LLAIPMKDRP…RALELLKVEL (227 aa)) enclose the Lon N-terminal domain. Residues 262 to 281 (LTTPSSEKEAKSEEPSKEDA) show a composition bias toward basic and acidic residues. 543-550 (GPPGTGKT) contributes to the ATP binding site. A compositionally biased stretch (basic and acidic residues) spans 756–765 (ALDSSKEKEG). Residues 756-832 (ALDSSKEKEG…SEEDQQPEPK (77 aa)) form a disordered region. Residues 768–779 (ASSEEANVNSES) show a composition bias toward low complexity. Residues 780–802 (TKSNTSQAEPVAESSTDISTKSK) are compositionally biased toward polar residues. Residues 803–818 (VASEKIETKEKKETNK) show a composition bias toward basic and acidic residues. The Lon proteolytic domain occupies 865–1053 (FPPPGVATGL…QEVFDKIFPN (189 aa)). Active-site residues include serine 959 and lysine 1002.

The protein belongs to the peptidase S16 family. As to quaternary structure, homohexamer or homoheptamer. Organized in a ring with a central cavity.

The protein localises to the mitochondrion matrix. The enzyme catalyses Hydrolysis of proteins in presence of ATP.. In terms of biological role, ATP-dependent serine protease that mediates the selective degradation of misfolded, unassembled or oxidatively damaged polypeptides as well as certain short-lived regulatory proteins in the mitochondrial matrix. May also have a chaperone function in the assembly of inner membrane protein complexes. Participates in the regulation of mitochondrial gene expression and in the maintenance of the integrity of the mitochondrial genome. Binds to mitochondrial DNA in a site-specific manner. The polypeptide is Lon protease homolog, mitochondrial (Debaryomyces hansenii (strain ATCC 36239 / CBS 767 / BCRC 21394 / JCM 1990 / NBRC 0083 / IGC 2968) (Yeast)).